Reading from the N-terminus, the 316-residue chain is Acetaldehyde dehydrogenase (316 aa).

11-14 serves as a coordination point for NAD(+); the sequence is SGNI. Cys131 (acyl-thioester intermediate) is an active-site residue. NAD(+)-binding positions include 162–170 and Asn289; that span reads SAGPGTRAN.

This sequence belongs to the acetaldehyde dehydrogenase family. As to quaternary structure, interacts with MhpE.

It catalyses the reaction acetaldehyde + NAD(+) + CoA = acetyl-CoA + NADH + H(+). It functions in the pathway aromatic compound metabolism; 3-phenylpropanoate degradation. Catalyzes the conversion of acetaldehyde to acetyl-CoA, using NAD(+) and coenzyme A. Is the final enzyme in the meta-cleavage pathway for the degradation of aromatic compounds. The polypeptide is Acetaldehyde dehydrogenase (Escherichia coli O157:H7).